The chain runs to 1098 residues: Protein diaphanous homolog 2 (1098 aa).

Position 1 is an N-acetylmethionine (methionine 1). The segment at 1–62 is disordered; that stretch reads MEELGAAASG…SFRKSATKRE (62 aa). Over residues 36-52 the composition is skewed to basic and acidic residues; the sequence is ANEEETRNKPKLRDRIT. The region spanning 90–463 is the GBD/FH3 domain; the sequence is SLILSEKEVL…QIVLHCSGMD (374 aa). Coiled coils occupy residues 375-416 and 490-539; these read QLRV…NMLK and EENE…GQGV. 5 disordered regions span residues 537-565, 578-611, 679-699, 1007-1047, and 1063-1098; these read QGVP…PPPP, PPPP…GVFP, MKGQ…PKKK, HKRK…NKEG, and GAAF…MSSK. 2 stretches are compositionally biased toward pro residues: residues 543-565 and 578-608; these read IPGP…PPPP and PPPP…PPGG. The FH1 domain occupies 544-620; sequence PGPPPPPPLP…PLLSGPIELP (77 aa). The 401-residue stretch at 625–1025 folds into the FH2 domain; it reads QKKLYKPDIP…SRRAKLAKEK (401 aa). The stretch at 999–1050 forms a coiled coil; sequence FLEALKENHKRKEMEEKSRRAKLAKEKAEQEKLERQKKKKQLIDINKEGDET. Basic and acidic residues-rich tracts occupy residues 1007–1032 and 1075–1087; these read HKRK…EKLE and RNPD…LERS. The DAD domain occupies 1048 to 1078; sequence DETGVMDNLLEALQSGAAFRDRRKRIPRNPD.

It belongs to the formin homology family. Diaphanous subfamily. In terms of assembly, interacts with MAPRE1 and APC.

In terms of biological role, may be involved in oogenesis. The polypeptide is Protein diaphanous homolog 2 (Diaph2) (Mus musculus (Mouse)).